The following is a 929-amino-acid chain: Bifunctional glutamine synthetase adenylyltransferase/adenylyl-removing enzyme (929 aa).

The tract at residues 1-422 (MTTPISTSRA…TRHFEQIFAV (422 aa)) is adenylyl removase. The interval 429-929 (LGTFARIRPE…FQLWEDVFGT (501 aa)) is adenylyl transferase.

This sequence belongs to the GlnE family. Requires Mg(2+) as cofactor.

It carries out the reaction [glutamine synthetase]-O(4)-(5'-adenylyl)-L-tyrosine + phosphate = [glutamine synthetase]-L-tyrosine + ADP. The enzyme catalyses [glutamine synthetase]-L-tyrosine + ATP = [glutamine synthetase]-O(4)-(5'-adenylyl)-L-tyrosine + diphosphate. In terms of biological role, involved in the regulation of glutamine synthetase GlnA, a key enzyme in the process to assimilate ammonia. When cellular nitrogen levels are high, the C-terminal adenylyl transferase (AT) inactivates GlnA by covalent transfer of an adenylyl group from ATP to specific tyrosine residue of GlnA, thus reducing its activity. Conversely, when nitrogen levels are low, the N-terminal adenylyl removase (AR) activates GlnA by removing the adenylyl group by phosphorolysis, increasing its activity. The regulatory region of GlnE binds the signal transduction protein PII (GlnB) which indicates the nitrogen status of the cell. The polypeptide is Bifunctional glutamine synthetase adenylyltransferase/adenylyl-removing enzyme (Nitrosomonas eutropha (strain DSM 101675 / C91 / Nm57)).